The primary structure comprises 115 residues: Photosystem II reaction center Psb28 protein (115 aa).

The protein belongs to the Psb28 family. Part of the photosystem II complex.

The protein resides in the plastid. Its subcellular location is the chloroplast thylakoid membrane. The chain is Photosystem II reaction center Psb28 protein from Pyropia yezoensis (Susabi-nori).